Consider the following 476-residue polypeptide: Transcription factor EB (476 aa).

2 disordered regions span residues 1-66 and 107-142; these read MASR…PPVP and HISPAQGSPKPPPAASPGVRAGHVLSSSAGNSAPNS. The interaction with ACSS2 stretch occupies residues 1-167; sequence MASRIGLRMQ…DDVIDNIMRL (167 aa). Residues 26 to 44 show a composition bias toward low complexity; that stretch reads QQQAVMHYMQQQQQQQQQQ. A phosphoserine mark is found at Ser-109, Ser-114, Ser-122, and Ser-138. Residues 132–142 show a composition bias toward low complexity; sequence SSSAGNSAPNS. The short motif at 136-153 is the Nuclear export signal element; that stretch reads GNSAPNSPMAMLHIGSNP. A Phosphoserine; by MTOR modification is found at Ser-142. Residues 156–165 are strong transcription activation domain; that stretch reads ELDDVIDNIM. Position 183 is a phosphothreonine (Thr-183). Position 211 is a phosphoserine; by MTOR (Ser-211). An S-(2,3-dicarboxypropyl)cysteine modification is found at Cys-212. The region spanning 235–288 is the bHLH domain; the sequence is QKKDNHNLIERRRRFNINDRIKELGMLIPKANDLDVRWNKGTILKASVDYIRRM. Residues 245–248 carry the Nuclear localization signal motif; the sequence is RRRR. A leucine-zipper region spans residues 298–319; the sequence is LENHSRRLEMTNKQLWLRIQEL. Ser-332 bears the Phosphoserine mark. Residues 349-430 form a disordered region; it reads ELPSEEGPGE…HGSPFPSLSK (82 aa). Positions 369–390 are enriched in pro residues; sequence PEPLPALPPQAPLPLPTQPPSP. A phosphoserine mark is found at Ser-423, Ser-441, Ser-466, Ser-467, and Ser-469. Residues 447–469 are compositionally biased toward low complexity; the sequence is SDPLLSTMSPEASKASSRRSSFS. The segment at 447-476 is disordered; sequence SDPLLSTMSPEASKASSRRSSFSMEEGDVL.

It belongs to the MiT/TFE family. In terms of assembly, homodimer and heterodimer; with TFE3 or MITF. Interacts (when phosphorylated by MTOR) with YWHAZ; promoting retention in the cytosol. Interacts with IRGM; promoting association between TFEB and PPP3CB and dephosphorylation. Interacts with small GTPases Rag (RagA/RRAGA, RagB/RRAGB, RagC/RRAGC and/or RagD/RRAGD); promoting its recruitment to lysosomal membrane in the presence of nutrients. Interacts with ACSS2. Post-translationally, phosphorylation at Ser-211 by MTOR via non-canonical mTORC1 pathway regulates its subcellular location and activity. When nutrients are present, phosphorylation by MTOR promotes association with 14-3-3/YWHA adapters and retention in the cytosol. Inhibition of mTORC1, starvation and lysosomal disruption, promotes dephosphorylation by calcineurin PPP3CB and translocation to the nucleus. Dephosphorylated by calcineurin PPP3CB in response to lysosomal Ca(2+) release. IRGM promotes dephosphorylation by calcineurin PPP3CB, resulting in TFEB nuclear translocation and stimulation of lysosomal biogenesis. Dephosphorylated by phosphatase PPP3CA following Coxsackievirus B3 infection, leading to nuclear translocation. Exported from the nucleus in a mTORC1-dependent manner in response to nutrient availability. In terms of processing, alkylated via a non-enzymatic covalent modification. Itaconate, an anti-inflammatory metabolite generated in response to lipopolysaccharide, alkylates Cys-212, preventing association with 14-3-3/YWHA adapters, thereby promoting nuclear translocation and activity. Sumoylated; does not affect dimerization with MITF. Post-translationally, (Microbial infection) Cleavage by Coxsackievirus B3 protease 3C after site Gln-60. This non-phosphorylated cleavage product retains its ability to interact with TFEB, TFE3 or MITF and presents impaired transcriptional activity, resulting in disruption of lysosomal functions and increased viral infection.

The protein resides in the nucleus. It is found in the cytoplasm. The protein localises to the cytosol. It localises to the lysosome membrane. Its activity is regulated as follows. Inhibited by eltrombopag drug, which binds to the bHLH domain and disrupts DNA-binding. Transcription factor that acts as a master regulator of lysosomal biogenesis, autophagy, lysosomal exocytosis, lipid catabolism, energy metabolism and immune response. Specifically recognizes and binds E-box sequences (5'-CANNTG-3'); efficient DNA-binding requires dimerization with itself or with another MiT/TFE family member such as TFE3 or MITF. Involved in the cellular response to amino acid availability by acting downstream of MTOR: in the presence of nutrients, TFEB phosphorylation by MTOR promotes its cytosolic retention and subsequent inactivation. Upon starvation or lysosomal stress, inhibition of MTOR induces TFEB dephosphorylation, resulting in nuclear localization and transcription factor activity. Specifically recognizes and binds the CLEAR-box sequence (5'-GTCACGTGAC-3') present in the regulatory region of many lysosomal genes, leading to activate their expression, thereby playing a central role in expression of lysosomal genes. Regulates lysosomal positioning in response to nutrient deprivation by promoting the expression of PIP4P1. Acts as a positive regulator of autophagy by promoting expression of genes involved in autophagy. In association with TFE3, activates the expression of CD40L in T-cells, thereby playing a role in T-cell-dependent antibody responses in activated CD4(+) T-cells and thymus-dependent humoral immunity. Specifically recognizes the gamma-E3 box, a subset of E-boxes, present in the heavy-chain immunoglobulin enhancer. Plays a role in the signal transduction processes required for normal vascularization of the placenta. Involved in the immune response to infection by the bacteria S.aureus, S.typhimurium or S.enterica: infection promotes itaconate production, leading to alkylation, resulting in nuclear localization and transcription factor activity. Itaconate-mediated alkylation activates TFEB-dependent lysosomal biogenesis, facilitating the bacteria clearance during the antibacterial innate immune response. In association with ACSS2, promotes the expression of genes involved in lysosome biogenesis and both autophagy upon glucose deprivation. In Homo sapiens (Human), this protein is Transcription factor EB.